The following is a 316-amino-acid chain: Apolipoprotein E (316 aa).

Residues 1–18 (MKVLWVAVVVALLAGCQA) form the signal peptide. Tandem repeats lie at residues 79 to 100 (ALMEETMKEVKAYKEELEGQLG), 101 to 122 (PMAQETQARVSKELQAAQARLG), 123 to 144 (SDMEDLRNRLAQYRSEVQAMLG), 145 to 166 (QSTEELRARMASHLRKLRKRLL), 167 to 188 (RDADDLKKRLAVYQAGASEGAE), 189 to 210 (RSLSAVRERFGPLVEQGQSRAA), 211 to 232 (TLSTLAGQPLLERAEAWRQKLH), and 233 to 254 (GRLEEVGVRAQDRLDKIRQQLE). An 8 X 22 AA approximate tandem repeats region spans residues 79–254 (ALMEETMKEV…RLDKIRQQLE (176 aa)). Met142 is modified (methionine sulfoxide). Ser146 is subject to Phosphoserine; by FAM20C. An LDL and other lipoprotein receptors binding region spans residues 157 to 167 (HLRKLRKRLLR). Heparin is bound at residue 161-164 (LRKR). Residues 209-289 (AATLSTLAGQ…SWFEPLVEDM (81 aa)) are lipid-binding and lipoprotein association. A glycan (O-linked (GalNAc...) threonine) is linked at Thr211. 228–235 (RQKLHGRL) is a heparin binding site. The segment at 265-316 (NQMRLQAEAFQARLRSWFEPLVEDMQRQWAGLVEKVQLALRPSPTSPPSENH) is homooligomerization. The segment at 277-289 (RLRSWFEPLVEDM) is specificity for association with VLDL.

This sequence belongs to the apolipoprotein A1/A4/E family. Homotetramer. May interact with ABCA1; functionally associated with ABCA1 in the biogenesis of HDLs. May interact with APP/A4 amyloid-beta peptide; the interaction is extremely stable in vitro but its physiological significance is unclear. May interact with MAPT. May interact with MAP2. In the cerebrospinal fluid, interacts with secreted SORL1. Interacts with PMEL; this allows the loading of PMEL luminal fragment on ILVs to induce fibril nucleation. In terms of processing, APOE exists as multiple glycosylated and sialylated glycoforms within cells and in plasma. The extent of glycosylation and sialylation are tissue and context specific. Glycated in plasma VLDL. Post-translationally, phosphorylated by FAM20C in the extracellular medium.

The protein resides in the secreted. The protein localises to the extracellular space. It is found in the extracellular matrix. Its subcellular location is the extracellular vesicle. It localises to the endosome. The protein resides in the multivesicular body. In terms of biological role, APOE is an apolipoprotein, a protein associating with lipid particles, that mainly functions in lipoprotein-mediated lipid transport between organs via the plasma and interstitial fluids. APOE is a core component of plasma lipoproteins and is involved in their production, conversion and clearance. Apolipoproteins are amphipathic molecules that interact both with lipids of the lipoprotein particle core and the aqueous environment of the plasma. As such, APOE associates with chylomicrons, chylomicron remnants, very low density lipoproteins (VLDL) and intermediate density lipoproteins (IDL) but shows a preferential binding to high-density lipoproteins (HDL). It also binds a wide range of cellular receptors including the LDL receptor/LDLR and the very low-density lipoprotein receptor/VLDLR that mediate the cellular uptake of the APOE-containing lipoprotein particles. Finally, APOE also has a heparin-binding activity and binds heparan-sulfate proteoglycans on the surface of cells, a property that supports the capture and the receptor-mediated uptake of APOE-containing lipoproteins by cells. The chain is Apolipoprotein E (APOE) from Bos mutus grunniens (Wild yak).